A 663-amino-acid chain; its full sequence is Oxytetracycline resistance protein (663 aa).

Positions 1–252 (MNKLNLGILA…GIRELLPSVH (252 aa)) constitute a tr-type G domain. Residues 10–17 (AHVDAGKT), 74–78 (DTPGH), and 128–131 (NKID) contribute to the GTP site.

The protein belongs to the TRAFAC class translation factor GTPase superfamily. Classic translation factor GTPase family. TetM/TetO subfamily.

Functionally, abolishes the inhibitory effect of oxytetracycline on protein synthesis by a non-covalent modification of the ribosomes. The chain is Oxytetracycline resistance protein (otrA) from Streptomyces rimosus.